The chain runs to 274 residues: Bis(5'-nucleosyl)-tetraphosphatase, symmetrical (274 aa).

The protein belongs to the Ap4A hydrolase family.

It carries out the reaction P(1),P(4)-bis(5'-adenosyl) tetraphosphate + H2O = 2 ADP + 2 H(+). Functionally, hydrolyzes diadenosine 5',5'''-P1,P4-tetraphosphate to yield ADP. The chain is Bis(5'-nucleosyl)-tetraphosphatase, symmetrical from Shewanella sp. (strain ANA-3).